Reading from the N-terminus, the 512-residue chain is Putative ribose/galactose/methyl galactoside import ATP-binding protein 1 (512 aa).

2 ABC transporter domains span residues 14–251 (IALT…VGRQ) and 262–507 (TSAN…TQRE). 46-53 (GENGAGKS) is a binding site for ATP.

It belongs to the ABC transporter superfamily. Carbohydrate importer 2 (CUT2) (TC 3.A.1.2) family.

Its subcellular location is the cell inner membrane. It catalyses the reaction D-ribose(out) + ATP + H2O = D-ribose(in) + ADP + phosphate + H(+). The enzyme catalyses D-galactose(out) + ATP + H2O = D-galactose(in) + ADP + phosphate + H(+). Functionally, part of an ABC transporter complex involved in carbohydrate import. Could be involved in ribose, galactose and/or methyl galactoside import. Responsible for energy coupling to the transport system. This chain is Putative ribose/galactose/methyl galactoside import ATP-binding protein 1, found in Burkholderia lata (strain ATCC 17760 / DSM 23089 / LMG 22485 / NCIMB 9086 / R18194 / 383).